A 156-amino-acid polypeptide reads, in one-letter code: uncharacterized protein (156 aa).

This is an uncharacterized protein from Haemophilus influenzae (strain ATCC 51907 / DSM 11121 / KW20 / Rd).